Consider the following 135-residue polypeptide: Transcriptional activator protein (135 aa).

Positions 17–32 (KVQHKIAKKKPIRRKR) match the Nuclear localization signal motif. The segment at 37-54 (CGCSYYLHLNCNNHGFTH) is a zinc-finger region. Polar residues-rich tracts occupy residues 77–87 (LFQDNRTQPEA) and 101–115 (IQPQHQEGNGDSQMF). A disordered region spans residues 77–117 (LFQDNRTQPEAISNEPRHHFHSDKIQPQHQEGNGDSQMFSR). Positions 120–135 (NLDDITASDWSFLKSI) are transactivation.

It belongs to the geminiviridae transcriptional activator protein family. As to quaternary structure, monomer. Homodimer. Homooligomer. Self-interaction correlates with nuclear localization and efficient activation of transcription. Monomers suppress local silencing by interacting with and inactivating host adenosine kinase 2 (ADK2) in the cytoplasm. Interacts with and inhibits host SNF1 kinase. Binds to ssDNA. May interact with host RPS27A. Post-translationally, phosphorylated.

The protein localises to the host nucleus. The protein resides in the host cytoplasm. Its function is as follows. Multifunctional protein that modulates host antiviral defenses and promotes host attractiveness to insect vectors. Acts as a suppressor of RNA-mediated gene silencing, also known as post-transcriptional gene silencing (PTGS), a mechanism of plant viral defense that limits the accumulation of viral RNAs. TrAP suppresses the host RNA silencing by inhibiting adenosine kinase 2 (ADK2), a kinase involved in a general methylation pathway. Also suppresses the host basal defense by interacting with and inhibiting SNF1 kinase, a key regulator of cell metabolism implicated in innate antiviral defense. Functionally, inhibits signal transduction by the phytohormone jasmonate, making the infected plant more attractive to aphids, which are the second host to play a role as a dissemination vector. Acts by binding to ubiquitin precursor RPS27A, thereby preventing ubiquitin degradation of JAZ. The polypeptide is Transcriptional activator protein (Tomato yellow leaf curl virus (strain Israel) (TYLCV)).